A 184-amino-acid chain; its full sequence is Endothelial cell-specific molecule 1 (184 aa).

The first 21 residues, 1 to 21 (MKSLLLLTTLLIPLHLGMAWS), serve as a signal peptide directing secretion. One can recognise an IGFBP N-terminal domain in the interval 24 to 102 (YAVDCPEHCD…GDEFGVCKDC (79 aa)). 6 cysteine pairs are disulfide-bonded: Cys-28-Cys-51, Cys-32-Cys-53, Cys-37-Cys-54, Cys-43-Cys-57, Cys-65-Cys-83, and Cys-77-Cys-99. A disordered region spans residues 145 to 184 (RTSASQTERDAASGDGNAVREEIGDRNAARPSVMKWLNPR). Residues 151 to 172 (TERDAASGDGNAVREEIGDRNA) show a composition bias toward basic and acidic residues. Ser-157 carries O-linked (Xyl...) (chondroitin sulfate) serine glycosylation.

Post-translationally, O-glycosylated; contains chondroitin sulfate and dermatan sulfate. In terms of tissue distribution, pineal gland specific.

The protein resides in the secreted. Functionally, involved in angiogenesis; promotes angiogenic sprouting. May have potent implications in lung endothelial cell-leukocyte interactions. This chain is Endothelial cell-specific molecule 1 (Esm1), found in Rattus norvegicus (Rat).